A 273-amino-acid chain; its full sequence is Flagellin FljO (273 aa).

This sequence belongs to the bacterial flagellin family. As to quaternary structure, in C.crescentus, the flagellar filament is composed of multiple flagellins of 29 kDa; 27 kDa and 25 kDa.

It localises to the secreted. The protein resides in the bacterial flagellum. Functionally, flagellin is the subunit protein which polymerizes to form the filaments of bacterial flagella. The polypeptide is Flagellin FljO (fljO) (Caulobacter vibrioides (strain ATCC 19089 / CIP 103742 / CB 15) (Caulobacter crescentus)).